Consider the following 427-residue polypeptide: 3-phosphoshikimate 1-carboxyvinyltransferase (427 aa).

The 3-phosphoshikimate site is built by Lys22, Ser23, and Arg27. Lys22 is a binding site for phosphoenolpyruvate. Residues Gly96 and Arg124 each coordinate phosphoenolpyruvate. 3-phosphoshikimate-binding residues include Ser169, Ser170, Gln171, Ser197, Asp313, Asn336, and Lys340. Residue Gln171 participates in phosphoenolpyruvate binding. Catalysis depends on Asp313, which acts as the Proton acceptor. Arg344, Arg386, and Lys411 together coordinate phosphoenolpyruvate.

This sequence belongs to the EPSP synthase family. Monomer.

It is found in the cytoplasm. The enzyme catalyses 3-phosphoshikimate + phosphoenolpyruvate = 5-O-(1-carboxyvinyl)-3-phosphoshikimate + phosphate. It functions in the pathway metabolic intermediate biosynthesis; chorismate biosynthesis; chorismate from D-erythrose 4-phosphate and phosphoenolpyruvate: step 6/7. In terms of biological role, catalyzes the transfer of the enolpyruvyl moiety of phosphoenolpyruvate (PEP) to the 5-hydroxyl of shikimate-3-phosphate (S3P) to produce enolpyruvyl shikimate-3-phosphate and inorganic phosphate. The protein is 3-phosphoshikimate 1-carboxyvinyltransferase of Escherichia coli O17:K52:H18 (strain UMN026 / ExPEC).